Here is a 172-residue protein sequence, read N- to C-terminus: Small ribosomal subunit protein uS4 (172 aa).

Positions 104 to 168 (RRLQTIVYRK…SPLAKMAQGG (65 aa)) constitute an S4 RNA-binding domain.

Belongs to the universal ribosomal protein uS4 family. In terms of assembly, part of the 30S ribosomal subunit. Contacts protein S5. The interaction surface between S4 and S5 is involved in control of translational fidelity.

Its function is as follows. One of the primary rRNA binding proteins, it binds directly to 16S rRNA where it nucleates assembly of the body of the 30S subunit. Functionally, with S5 and S12 plays an important role in translational accuracy. The polypeptide is Small ribosomal subunit protein uS4 (Thermofilum pendens (strain DSM 2475 / Hrk 5)).